The chain runs to 74 residues: Putative antitoxin VapB48 (74 aa).

Possibly the antitoxin component of a type II toxin-antitoxin (TA) system. Its cognate toxin is VapC48 (Potential). The chain is Putative antitoxin VapB48 (vapB48) from Mycobacterium tuberculosis (strain CDC 1551 / Oshkosh).